We begin with the raw amino-acid sequence, 269 residues long: Novel plant SNARE 13 (269 aa).

Over 1-217 (MASNLPMSPQ…IGRQVATDKC (217 aa)) the chain is Cytoplasmic. The stretch at 33–94 (DKIKDSTRQS…KQSMIKELNS (62 aa)) forms a coiled coil. At serine 74 the chain carries Phosphoserine. The t-SNARE coiled-coil homology domain occupies 146 to 208 (MKRMDETDQA…KKASQLVKEI (63 aa)). A helical; Anchor for type IV membrane protein membrane pass occupies residues 218 to 238 (IMGFLFLIVCGVVAIIIVKIV). At 239-269 (NPNNKDIRDIPGLAPPAQSRKLLYLRNQDYM) the chain is on the vesicular side.

Belongs to the novel plant SNARE family.

The protein resides in the membrane. In terms of biological role, vesicle trafficking protein that functions in the secretory pathway. The sequence is that of Novel plant SNARE 13 (NPSN13) from Arabidopsis thaliana (Mouse-ear cress).